A 524-amino-acid polypeptide reads, in one-letter code: Excitatory amino acid transporter 3 (524 aa).

The Cytoplasmic segment spans residues 1 to 18 (MGKPARKGCDWKRFLRNN). A helical membrane pass occupies residues 19–38 (WLLLSTVVAVVLGIVIGVLV). At 39-61 (REYSKLSNLEKFYFSFPGEILMR) the chain is on the extracellular side. The chain crosses the membrane as a helical span at residues 62 to 82 (MLKLVILPLIVSSMITGVATL). Residues 83–93 (DSNVSGKIGLR) lie on the Cytoplasmic side of the membrane. Residues 94 to 114 (AVVYYFCTTLIAVILGIVLVV) traverse the membrane as a helical segment. Tyr98, Thr101, and Thr102 together coordinate Na(+). Residues 115–205 (SIKPGVTQKV…KTKEYKVVGM (91 aa)) are Extracellular-facing. N-linked (GlcNAc...) asparagine glycosylation is found at Asn178 and Asn195. A helical membrane pass occupies residues 206–229 (YSDGINVLGLIVFCLVLGIVIGRK). Residues 230–238 (WEKGQILVD) are Cytoplasmic-facing. The chain crosses the membrane as a helical span at residues 239 to 266 (FFNALSDATMKIVQIIMCYMPIGILFLI). The Extracellular segment spans residues 267 to 286 (AGKIIEVEDWEIFRKLGLYM). A helical transmembrane segment spans residues 287–308 (ATVLSGLAIHSIVILPLIYFII). Residues 309 to 313 (VRKNP) lie on the Cytoplasmic side of the membrane. Positions 314–344 (FQFAMGMAQALLTALMISSSSATLPVTFRCA) form an intramembrane region, discontinuously helical. L-aspartate-binding residues include Ser331 and Ser333. Residues 345–353 (EEKNRVDKR) lie on the Cytoplasmic side of the membrane. A helical transmembrane segment spans residues 354–380 (ITRFVLPVGATINMDGTALYEAVAAVF). 4 residues coordinate Na(+): Gly362, Thr364, Asn366, and Asp368. Residue Thr370 coordinates L-aspartate. Residues 381–393 (IAQLNDLDLSVGQ) lie on the Extracellular side of the membrane. The segment at residues 394-427 (IITISVTATAASIGAAGVPQPGLVTMVIVLSAVG) is an intramembrane region (discontinuously helical). Ser405, Ile406, and Ala408 together coordinate Na(+). Val411 provides a ligand contact to L-aspartate. The Extracellular portion of the chain corresponds to 428–440 (LPAEDVTLIIAVD). Residues 441 to 462 (WLLDRFRTMVNVLGDAFGTGIV) form a helical membrane-spanning segment. The L-aspartate site is built by Arg447, Thr448, and Asn451. Na(+)-binding residues include Asn451 and Asp455. The Cytoplasmic segment spans residues 463–524 (EKLSKKELEQ…TISFTQTSQF (62 aa)). Ser517 and Ser522 each carry phosphoserine.

This sequence belongs to the dicarboxylate/amino acid:cation symporter (DAACS) (TC 2.A.23) family. SLC1A1 subfamily. In terms of assembly, homotrimer. Interacts with ARL6IP5. Interacts with RTN2 (via N-terminus); the interaction promotes cell surface expression of SLC1A1. Interacts with SORCS2; this interaction is important for normal expression at the cell membrane.

It localises to the cell membrane. It is found in the apical cell membrane. Its subcellular location is the synapse. The protein resides in the synaptosome. The protein localises to the early endosome membrane. It localises to the late endosome membrane. It is found in the recycling endosome membrane. The catalysed reaction is K(+)(in) + L-glutamate(out) + 3 Na(+)(out) + H(+)(out) = K(+)(out) + L-glutamate(in) + 3 Na(+)(in) + H(+)(in). The enzyme catalyses K(+)(in) + L-aspartate(out) + 3 Na(+)(out) + H(+)(out) = K(+)(out) + L-aspartate(in) + 3 Na(+)(in) + H(+)(in). It catalyses the reaction D-aspartate(out) + K(+)(in) + 3 Na(+)(out) + H(+)(out) = D-aspartate(in) + K(+)(out) + 3 Na(+)(in) + H(+)(in). It carries out the reaction K(+)(in) + L-cysteine(out) + 3 Na(+)(out) + H(+)(out) = K(+)(out) + L-cysteine(in) + 3 Na(+)(in) + H(+)(in). Sodium-dependent, high-affinity amino acid transporter that mediates the uptake of L-glutamate and also L-aspartate and D-aspartate. Can also transport L-cysteine. Functions as a symporter that transports one amino acid molecule together with two or three Na(+) ions and one proton, in parallel with the counter-transport of one K(+) ion. Mediates Cl(-) flux that is not coupled to amino acid transport; this avoids the accumulation of negative charges due to aspartate and Na(+) symport. Plays an important role in L-glutamate and L-aspartate reabsorption in renal tubuli. Plays a redundant role in the rapid removal of released glutamate from the synaptic cleft, which is essential for terminating the postsynaptic action of glutamate. Contributes to glutathione biosynthesis and protection against oxidative stress via its role in L-glutamate and L-cysteine transport. Negatively regulated by ARL6IP5. The chain is Excitatory amino acid transporter 3 (SLC1A1) from Bos taurus (Bovine).